Reading from the N-terminus, the 657-residue chain is Probable alpha-galactosidase D (657 aa).

The first 16 residues, 1-16 (MLPKIFYLSLLPAALG), serve as a signal peptide directing secretion. N47 and N91 each carry an N-linked (GlcNAc...) asparagine glycan. A disulfide bridge connects residues C124 and C157. D155 functions as the Nucleophile in the catalytic mechanism. N-linked (GlcNAc...) asparagine glycans are attached at residues N182 and N191. 200 to 204 (EWGID) serves as a coordination point for substrate. D222 functions as the Proton donor in the catalytic mechanism. Residues N291, N438, N460, N505, N539, N543, and N582 are each glycosylated (N-linked (GlcNAc...) asparagine).

It belongs to the glycosyl hydrolase 27 family.

The protein localises to the secreted. The enzyme catalyses Hydrolysis of terminal, non-reducing alpha-D-galactose residues in alpha-D-galactosides, including galactose oligosaccharides, galactomannans and galactolipids.. Hydrolyzes a variety of simple alpha-D-galactoside as well as more complex molecules such as oligosaccharides and polysaccharides. This is Probable alpha-galactosidase D (aglD) from Aspergillus oryzae (strain ATCC 42149 / RIB 40) (Yellow koji mold).